The chain runs to 996 residues: Sodium/potassium-transporting ATPase subunit alpha-A (996 aa).

Transmembrane regions (helical) follow at residues 73–93 (LFGG…IAYT) and 107–123 (LYLG…TGCF). The disordered stretch occupies residues 191-211 (DNSSLTGESEPQSRSTECTND). Helical transmembrane passes span 268-290 (FIHI…SFLY) and 297-325 (AAIF…TLTA). Aspartate 353 serves as the catalytic 4-aspartylphosphate intermediate. Residue lysine 483 participates in ATP binding. Positions 692 and 696 each coordinate Mg(2+). Transmembrane regions (helical) follow at residues 762–785 (LSPF…ILCI), 820–847 (ERLI…VIMG), 889–909 (YTCH…DLII), and 926–951 (TLNF…DKGL).

The protein belongs to the cation transport ATPase (P-type) (TC 3.A.3) family. Type IIC subfamily. As to quaternary structure, the sodium/potassium-transporting ATPase is composed of a catalytic alpha subunit, an auxiliary non-catalytic beta subunit and an additional regulatory subunit.

It is found in the cell membrane. It catalyses the reaction K(+)(out) + Na(+)(in) + ATP + H2O = K(+)(in) + Na(+)(out) + ADP + phosphate + H(+). Functionally, this is the catalytic component of the active enzyme, which catalyzes the hydrolysis of ATP coupled with the exchange of sodium and potassium ions across the plasma membrane. This action creates the electrochemical gradient of sodium and potassium ions, providing the energy for active transport of various nutrients. In Artemia franciscana (Brine shrimp), this protein is Sodium/potassium-transporting ATPase subunit alpha-A.